We begin with the raw amino-acid sequence, 399 residues long: PCI domain-containing protein 2 (399 aa).

Positions 210-391 (VTYKYYVGRK…QKLVVSKQNP (182 aa)) constitute a PCI domain.

This sequence belongs to the CSN12 family.

The sequence is that of PCI domain-containing protein 2 (pcid2) from Danio rerio (Zebrafish).